The following is a 117-amino-acid chain: Large ribosomal subunit protein bL19 (117 aa).

Belongs to the bacterial ribosomal protein bL19 family.

Functionally, this protein is located at the 30S-50S ribosomal subunit interface and may play a role in the structure and function of the aminoacyl-tRNA binding site. This chain is Large ribosomal subunit protein bL19, found in Vesicomyosocius okutanii subsp. Calyptogena okutanii (strain HA).